Reading from the N-terminus, the 193-residue chain is Imidazoleglycerol-phosphate dehydratase (193 aa).

Belongs to the imidazoleglycerol-phosphate dehydratase family.

It is found in the cytoplasm. The catalysed reaction is D-erythro-1-(imidazol-4-yl)glycerol 3-phosphate = 3-(imidazol-4-yl)-2-oxopropyl phosphate + H2O. It participates in amino-acid biosynthesis; L-histidine biosynthesis; L-histidine from 5-phospho-alpha-D-ribose 1-diphosphate: step 6/9. The polypeptide is Imidazoleglycerol-phosphate dehydratase (Sulfolobus acidocaldarius (strain ATCC 33909 / DSM 639 / JCM 8929 / NBRC 15157 / NCIMB 11770)).